Here is a 95-residue protein sequence, read N- to C-terminus: MTVKDFIDKLLGRQTSSASTAKQRLQLVLAHDRSDLNPELLAQMRREILEVVARYVEIDIEEGDVSLETEDRMTALVANLPIRRSIQQSPNGGTL.

The protein belongs to the MinE family.

Prevents the cell division inhibition by proteins MinC and MinD at internal division sites while permitting inhibition at polar sites. This ensures cell division at the proper site by restricting the formation of a division septum at the midpoint of the long axis of the cell. This is Cell division topological specificity factor from Synechococcus sp. (strain CC9902).